The following is a 1073-amino-acid chain: ATP-dependent helicase/deoxyribonuclease subunit B (1073 aa).

This sequence belongs to the helicase family. AddB/RexB type 2 subfamily. As to quaternary structure, heterodimer of AddA and RexB. The cofactor is Mg(2+).

In terms of biological role, the heterodimer acts as both an ATP-dependent DNA helicase and an ATP-dependent, dual-direction single-stranded exonuclease. Recognizes the chi site generating a DNA molecule suitable for the initiation of homologous recombination. This subunit has 5' -&gt; 3' nuclease activity but not helicase activity. This chain is ATP-dependent helicase/deoxyribonuclease subunit B, found in Streptococcus equi subsp. zooepidemicus (strain H70).